Consider the following 472-residue polypeptide: NADH-quinone oxidoreductase subunit N (472 aa).

14 helical membrane passes run 5–25 (LLTTEMLTALLGIGLLAIGLL), 36–56 (AYAAVFGLLGILVVTFFQYGI), 77–97 (IFLVAAILVILSAIDYVDGLP), 103–123 (FYALLVFATLGMMVMASANDL), 126–146 (LYVGMELMTITFFILVAYILG), 158–178 (LLLGGASSAVLLYGLSLLYGL), 197–217 (LAIAVVTIIAGFGFKISAVPF), 229–249 (PTPVTGFLAAASKAAGFAVLV), 264–284 (WLTVIAVLAGVTMVIGNVVAI), 292–309 (MLAYSSVAQAGYLLVGLM), 319–339 (ILFYAMLYVVANMGAFAVATA), 363–383 (ASVMTISLLSLAGIPPLAGFV), 396–416 (GVLWPAFLGFVMSMVSVYYYL), and 441–461 (LTVIFSMVVTVILGIYPGPLA).

The protein belongs to the complex I subunit 2 family. As to quaternary structure, NDH-1 is composed of 14 different subunits. Subunits NuoA, H, J, K, L, M, N constitute the membrane sector of the complex.

The protein resides in the cell membrane. It catalyses the reaction a quinone + NADH + 5 H(+)(in) = a quinol + NAD(+) + 4 H(+)(out). Its function is as follows. NDH-1 shuttles electrons from NADH, via FMN and iron-sulfur (Fe-S) centers, to quinones in the respiratory chain. The immediate electron acceptor for the enzyme in this species is believed to be a menaquinone. Couples the redox reaction to proton translocation (for every two electrons transferred, four hydrogen ions are translocated across the cytoplasmic membrane), and thus conserves the redox energy in a proton gradient. This is NADH-quinone oxidoreductase subunit N from Heliobacterium modesticaldum (strain ATCC 51547 / Ice1).